A 375-amino-acid chain; its full sequence is Venom allergen 5 (375 aa).

The signal sequence occupies residues 1-26 (MSAPVGIPSLLLALCALLCVLNAVRS). One can recognise an SCP domain in the interval 66–210 (VRLHNNLRSK…RRYTQIVCNY (145 aa)). 2 N-linked (GlcNAc...) asparagine glycosylation sites follow: Asn300 and Asn366.

It belongs to the CRISP family. Venom allergen 5-like subfamily. Contains 9 disulfide bonds. Expressed by the venom gland.

It localises to the secreted. The chain is Venom allergen 5 from Lycosa singoriensis (Wolf spider).